We begin with the raw amino-acid sequence, 87 residues long: Mu-theraphotoxin-Cg1a (87 aa).

Positions 1-21 (MKVLVLITLAVLGAMFVWTSA) are cleaved as a signal peptide. A propeptide spanning residues 22 to 50 (AELEERGSDQRDSPAWVKSMERIFQSEER) is cleaved from the precursor. Cystine bridges form between Cys-52–Cys-66, Cys-59–Cys-71, and Cys-65–Cys-79.

This sequence belongs to the neurotoxin 10 (Hwtx-1) family. 39 (Jztx-34) subfamily. As to expression, expressed by the venom gland.

The protein localises to the secreted. In terms of biological role, potent and selective inhibitor of hNav1.7/SCN9A (IC(50)=610 nM). Also shows a weak activity towards Nav1.3/SCN3A (IC(50)=7950 nM). In addition, inhibits voltage-gated potassium channels (Kv) in rat DRG neurons. It does not alter the voltage dependence of activation, but it causes a small hyperpolarizing shift in the steady-state inactivations of Nav1.7/SNC9A. Chimera experiments show that the toxin binds to the DIIS3-S4 linker (site 4) of Nav1.7/SCN9A, whereas Nav1.7/SCN9A Asp-827 residue is shown by substitution experiments to be critical for its sensitivity. The toxin traps the domain II voltage sensor in the closed configuration, and not in an outward position. In vivo, shows analgesic activity in three rodent pain models (formalin-induced, acid-induced, and thermal). The protein is Mu-theraphotoxin-Cg1a of Chilobrachys guangxiensis (Chinese earth tiger tarantula).